Here is a 411-residue protein sequence, read N- to C-terminus: Adenylosuccinate synthetase (411 aa).

GTP contacts are provided by residues 11–17 (GDEGKGK) and 39–41 (GHT). The active-site Proton acceptor is the aspartate 12. Positions 12 and 39 each coordinate Mg(2+). IMP-binding positions include 12–15 (DEGK), 37–40 (NAGH), threonine 121, arginine 135, glutamine 215, threonine 230, and arginine 294. Histidine 40 serves as the catalytic Proton donor. 290–296 (TTTKRPR) serves as a coordination point for substrate. Residues arginine 296, 322 to 324 (KLD), and 400 to 402 (STS) contribute to the GTP site.

The protein belongs to the adenylosuccinate synthetase family. As to quaternary structure, homodimer. The cofactor is Mg(2+).

The protein localises to the cytoplasm. The enzyme catalyses IMP + L-aspartate + GTP = N(6)-(1,2-dicarboxyethyl)-AMP + GDP + phosphate + 2 H(+). Its pathway is purine metabolism; AMP biosynthesis via de novo pathway; AMP from IMP: step 1/2. In terms of biological role, plays an important role in the de novo pathway of purine nucleotide biosynthesis. Catalyzes the first committed step in the biosynthesis of AMP from IMP. The protein is Adenylosuccinate synthetase of Helicobacter pylori (strain P12).